The chain runs to 194 residues: Serine/threonine-protein kinase mos (194 aa).

Residues 47-194 (LCLLNLLGSG…HLDLKPANIF (148 aa)) form the Protein kinase domain. ATP contacts are provided by residues 53-61 (LGSGGFGSV) and lysine 74. Catalysis depends on aspartate 187, which acts as the Proton acceptor.

It belongs to the protein kinase superfamily. Ser/Thr protein kinase family.

The catalysed reaction is L-seryl-[protein] + ATP = O-phospho-L-seryl-[protein] + ADP + H(+). It carries out the reaction L-threonyl-[protein] + ATP = O-phospho-L-threonyl-[protein] + ADP + H(+). This Dendroaspis angusticeps (Eastern green mamba) protein is Serine/threonine-protein kinase mos (MOS).